Reading from the N-terminus, the 518-residue chain is ATP synthase F(1) complex catalytic subunit beta, mitochondrial (518 aa).

ADP contacts are provided by G199, V200, G201, K202, T203, and V204. An ATP-binding site is contributed by G199. Phosphate contacts are provided by G199, V200, G201, K202, and T203. G201, K202, T203, and V204 together coordinate ATP. Residue T203 coordinates Mg(2+). E228 serves as a coordination point for Mg(2+). R229 is an ATP binding site.

This sequence belongs to the ATPase alpha/beta chains family. Homotrimer. Component of the ATP synthase complex composed at least of ATP5F1A/subunit alpha, ATP5F1B/subunit beta, ATP5MC1/subunit c (homooctomer), MT-ATP6/subunit a, MT-ATP8/subunit 8, ATP5ME/subunit e, ATP5MF/subunit f, ATP5MG/subunit g, ATP5MK/subunit k, ATP5MJ/subunit j, ATP5F1C/subunit gamma, ATP5F1D/subunit delta, ATP5F1E/subunit epsilon, ATP5PF/subunit F6, ATP5PB/subunit b, ATP5PD/subunit d, ATP5PO/subunit OSCP. ATP synthase complex consists of a soluble F(1) head domain (subunits alpha(3) and beta(3)) - the catalytic core - and a membrane F(0) domain - the membrane proton channel (subunits c, a, 8, e, f, g, k and j). These two domains are linked by a central stalk (subunits gamma, delta, and epsilon) rotating inside the F1 region and a stationary peripheral stalk (subunits F6, b, d, and OSCP).

Its subcellular location is the mitochondrion inner membrane. It catalyses the reaction ATP + H2O + 4 H(+)(in) = ADP + phosphate + 5 H(+)(out). Functionally, catalytic subunit beta, of the mitochondrial membrane ATP synthase complex (F(1)F(0) ATP synthase or Complex V) that produces ATP from ADP in the presence of a proton gradient across the membrane which is generated by electron transport complexes of the respiratory chain. ATP synthase complex consist of a soluble F(1) head domain - the catalytic core - and a membrane F(1) domain - the membrane proton channel. These two domains are linked by a central stalk rotating inside the F(1) region and a stationary peripheral stalk. During catalysis, ATP synthesis in the catalytic domain of F(1) is coupled via a rotary mechanism of the central stalk subunits to proton translocation. In vivo, can only synthesize ATP although its ATP hydrolase activity can be activated artificially in vitro. With the subunit alpha (ATP5F1A), forms the catalytic core in the F(1) domain. The chain is ATP synthase F(1) complex catalytic subunit beta, mitochondrial from Cyprinus carpio (Common carp).